Reading from the N-terminus, the 379-residue chain is ATP phosphoribosyltransferase regulatory subunit (379 aa).

This sequence belongs to the class-II aminoacyl-tRNA synthetase family. HisZ subfamily. As to quaternary structure, heteromultimer composed of HisG and HisZ subunits.

The protein resides in the cytoplasm. It functions in the pathway amino-acid biosynthesis; L-histidine biosynthesis; L-histidine from 5-phospho-alpha-D-ribose 1-diphosphate: step 1/9. Required for the first step of histidine biosynthesis. May allow the feedback regulation of ATP phosphoribosyltransferase activity by histidine. In Rhizobium meliloti (strain 1021) (Ensifer meliloti), this protein is ATP phosphoribosyltransferase regulatory subunit (hisZ).